Reading from the N-terminus, the 345-residue chain is Telomere-binding protein cav (345 aa).

Residues 115–337 are required for binding to Su(var)205; it reads RRKMVQPYPE…TITFQNTESE (223 aa). Disordered stretches follow at residues 145–180 and 200–231; these read RLDR…HEDQ and PPGV…INRP. 2 short sequence motifs (su(var)205-binding Pro-containing repeat) span residues 231–237 and 298–304; these read PETEINE and PETEMNE.

In terms of assembly, component of the HipHop-HOAP telomere capping complex, composed of at least HipHop and cav/HOAP, and may include Su(var)205/HP1; HipHop and cav/HOAP, but not Su(var)205, are interdependent for their protein stability. Interacts with HipHop (via N-terminus). Interacts (via C-terminus) with Su(var)205/HP1 dimer (via hinge and chromoshadow domain) and Orc1; possibly interacts with other components of the origin recognition complex (ORC). Each molecule of cav/HOAP interacts with 2 molecules of Su(var)205/HP1. The HipHop-HOAP complex recruits the MTV complex, consisting of moi/modigliani, tea and ver/verrocchio, to telomeres, forming the terminin telomere-capping complex. Interacts with moi/modigliani; the interaction is direct. Interacts with ver/verrochio; the interaction is direct. Interacts with HP6, which is also part of the terminin complex. Interacts (via N-terminus) with peo/pendolino (via N-terminus); the interaction is direct.

The protein resides in the nucleus. It localises to the chromosome. Its subcellular location is the telomere. Its function is as follows. Part of the HipHop-HOAP complex that recruits the MTV complex to form the terminin telomere-capping complex, which binds to chromosome ends in a sequence-independent manner and prevents telomere fusion. Telomere capping is independent of the origin recognition complex (ORC). This Drosophila melanogaster (Fruit fly) protein is Telomere-binding protein cav.